The following is a 408-amino-acid chain: Arginine deiminase (408 aa).

C397 functions as the Amidino-cysteine intermediate in the catalytic mechanism.

It belongs to the arginine deiminase family.

Its subcellular location is the cytoplasm. The catalysed reaction is L-arginine + H2O = L-citrulline + NH4(+). It participates in amino-acid degradation; L-arginine degradation via ADI pathway; carbamoyl phosphate from L-arginine: step 1/2. The polypeptide is Arginine deiminase (Listeria innocua serovar 6a (strain ATCC BAA-680 / CLIP 11262)).